We begin with the raw amino-acid sequence, 758 residues long: 5-methyltetrahydropteroyltriglutamate--homocysteine methyltransferase (758 aa).

Residues 16 to 19 (RELK) and lysine 116 each bind 5-methyltetrahydropteroyltri-L-glutamate. Residues 436-438 (IGS) and glutamate 489 contribute to the L-homocysteine site. L-methionine is bound by residues 436 to 438 (IGS) and glutamate 489. Residues 520–521 (RC) and tryptophan 566 each bind 5-methyltetrahydropteroyltri-L-glutamate. Aspartate 604 provides a ligand contact to L-homocysteine. L-methionine is bound at residue aspartate 604. Residue glutamate 610 participates in 5-methyltetrahydropteroyltri-L-glutamate binding. Residues histidine 646, cysteine 648, and glutamate 670 each coordinate Zn(2+). Residue histidine 699 is the Proton donor of the active site. Cysteine 731 contacts Zn(2+).

This sequence belongs to the vitamin-B12 independent methionine synthase family. Zn(2+) is required as a cofactor.

The catalysed reaction is 5-methyltetrahydropteroyltri-L-glutamate + L-homocysteine = tetrahydropteroyltri-L-glutamate + L-methionine. The protein operates within amino-acid biosynthesis; L-methionine biosynthesis via de novo pathway; L-methionine from L-homocysteine (MetE route): step 1/1. Catalyzes the transfer of a methyl group from 5-methyltetrahydrofolate to homocysteine resulting in methionine formation. In Xylella fastidiosa (strain M23), this protein is 5-methyltetrahydropteroyltriglutamate--homocysteine methyltransferase.